The sequence spans 758 residues: 5-methyltetrahydropteroyltriglutamate--homocysteine methyltransferase (758 aa).

Residues 16-19 and Lys-112 contribute to the 5-methyltetrahydropteroyltri-L-glutamate site; that span reads RELK. Residues 433–435 and Glu-486 contribute to the L-homocysteine site; that span reads IGS. Residues 433-435 and Glu-486 each bind L-methionine; that span reads IGS. 5-methyltetrahydropteroyltri-L-glutamate contacts are provided by residues 517-518 and Trp-563; that span reads RC. An L-homocysteine-binding site is contributed by Asp-601. Asp-601 serves as a coordination point for L-methionine. Glu-607 contacts 5-methyltetrahydropteroyltri-L-glutamate. 3 residues coordinate Zn(2+): His-643, Cys-645, and Glu-667. The active-site Proton donor is the His-696. Residue Cys-728 participates in Zn(2+) binding.

Belongs to the vitamin-B12 independent methionine synthase family. Zn(2+) serves as cofactor.

The enzyme catalyses 5-methyltetrahydropteroyltri-L-glutamate + L-homocysteine = tetrahydropteroyltri-L-glutamate + L-methionine. Its pathway is amino-acid biosynthesis; L-methionine biosynthesis via de novo pathway; L-methionine from L-homocysteine (MetE route): step 1/1. Its function is as follows. Catalyzes the transfer of a methyl group from 5-methyltetrahydrofolate to homocysteine resulting in methionine formation. The protein is 5-methyltetrahydropteroyltriglutamate--homocysteine methyltransferase of Neisseria meningitidis serogroup B (strain ATCC BAA-335 / MC58).